The chain runs to 283 residues: Acetylglutamate kinase (283 aa).

Residues 63 to 64 (GG), R85, and N178 contribute to the substrate site.

This sequence belongs to the acetylglutamate kinase family. ArgB subfamily.

It is found in the plastid. Its subcellular location is the chloroplast. The enzyme catalyses N-acetyl-L-glutamate + ATP = N-acetyl-L-glutamyl 5-phosphate + ADP. The protein operates within amino-acid biosynthesis; L-arginine biosynthesis; N(2)-acetyl-L-ornithine from L-glutamate: step 2/4. Catalyzes the ATP-dependent phosphorylation of N-acetyl-L-glutamate. The polypeptide is Acetylglutamate kinase (Porphyra purpurea (Red seaweed)).